A 101-amino-acid polypeptide reads, in one-letter code: MAGQKIRIRLKAYDHEAIDASARKIVETVVRTGASVVGPVPLPTEKNVYCVIRSPHKYKDSREHFEMRTHKRLIDIIDPTPKTVDALMRIDLPASVDVNIQ.

This sequence belongs to the universal ribosomal protein uS10 family. As to quaternary structure, part of the 30S ribosomal subunit.

In terms of biological role, involved in the binding of tRNA to the ribosomes. The polypeptide is Small ribosomal subunit protein uS10 (Mycobacterium bovis (strain ATCC BAA-935 / AF2122/97)).